The primary structure comprises 238 residues: Ribonuclease PH (238 aa).

Phosphate is bound by residues R86 and 124-126; that span reads GTR.

Belongs to the RNase PH family. As to quaternary structure, homohexameric ring arranged as a trimer of dimers.

It catalyses the reaction tRNA(n+1) + phosphate = tRNA(n) + a ribonucleoside 5'-diphosphate. Phosphorolytic 3'-5' exoribonuclease that plays an important role in tRNA 3'-end maturation. Removes nucleotide residues following the 3'-CCA terminus of tRNAs; can also add nucleotides to the ends of RNA molecules by using nucleoside diphosphates as substrates, but this may not be physiologically important. Probably plays a role in initiation of 16S rRNA degradation (leading to ribosome degradation) during starvation. The sequence is that of Ribonuclease PH from Marinobacter nauticus (strain ATCC 700491 / DSM 11845 / VT8) (Marinobacter aquaeolei).